Consider the following 294-residue polypeptide: 4-hydroxy-tetrahydrodipicolinate synthase (294 aa).

Thr-45 contributes to the pyruvate binding site. Tyr-133 functions as the Proton donor/acceptor in the catalytic mechanism. Lys-161 acts as the Schiff-base intermediate with substrate in catalysis. Ile-203 provides a ligand contact to pyruvate.

The protein belongs to the DapA family. Homotetramer; dimer of dimers.

It is found in the cytoplasm. The catalysed reaction is L-aspartate 4-semialdehyde + pyruvate = (2S,4S)-4-hydroxy-2,3,4,5-tetrahydrodipicolinate + H2O + H(+). It functions in the pathway amino-acid biosynthesis; L-lysine biosynthesis via DAP pathway; (S)-tetrahydrodipicolinate from L-aspartate: step 3/4. Functionally, catalyzes the condensation of (S)-aspartate-beta-semialdehyde [(S)-ASA] and pyruvate to 4-hydroxy-tetrahydrodipicolinate (HTPA). This chain is 4-hydroxy-tetrahydrodipicolinate synthase, found in Shewanella baltica (strain OS223).